We begin with the raw amino-acid sequence, 158 residues long: C-type lectin mannose-binding isoform (158 aa).

An N-terminal signal peptide occupies residues 1-20 (MGRFLLVTLSMLVVTFSLNE). 3 disulfide bridges follow: Cys26-Cys37, Cys54-Cys154, and Cys129-Cys146. The region spanning 33 to 155 (KNGFCYKVFN…CEALYHFICQ (123 aa)) is the C-type lectin domain. Residues 119 to 121 (EPN) carry the Mannose-binding motif. A glycan (N-linked (GlcNAc...) asparagine) is linked at Asn121. Glu127, Asn142, and Asp143 together coordinate Ca(2+).

This sequence belongs to the true venom lectin family. As to quaternary structure, homodimer; disulfide-linked. Expressed by the venom gland.

The protein resides in the secreted. In terms of biological role, mannose-binding lectin that binds to and agglutinates erythrocytes in a calcium-dependent manner. The polypeptide is C-type lectin mannose-binding isoform (Notechis scutatus scutatus (Mainland tiger snake)).